The primary structure comprises 598 residues: uncharacterized protein (598 aa).

The segment covering 1–19 (MSVPLRFSTPSSSPSASDN) has biased composition (low complexity). Disordered stretches follow at residues 1–54 (MSVP…MRPK), 139–176 (QKNQ…PNWK), and 194–279 (EAQL…ITMP). At 1–313 (MSVPLRFSTP…CKIRHFFREG (313 aa)) the chain is on the cytoplasmic side. The segment covering 30–48 (ELDTFNTTDVPRRVNTTKA) has biased composition (polar residues). The segment covering 147–165 (RANSRVNSRANSRANSSVS) has biased composition (low complexity). Polar residues-rich tracts occupy residues 218-242 (FSLQ…SSAI) and 255-276 (PRNN…SQDI). A helical membrane pass occupies residues 314 to 334 (FAEFLGTLVLVVFGVGSNLQA). The Extracellular segment spans residues 335 to 346 (TVTNGAGGSFES). Residues 347-367 (LSFAWGFGCMLGVYIAGGISG) form a helical membrane-spanning segment. Residues 368-388 (GHVNPAVTISLAIFRKFPWYK) lie on the Cytoplasmic side of the membrane. Positions 371-373 (NPA) match the NPA 1 motif. The helical transmembrane segment at 389–409 (VPIYIFFQIWGAFFGGALAYG) threads the bilayer. Topologically, residues 410-444 (YHWSSITEFEGGKDIRTPATGGCLYTNPKPYVTWR) are extracellular. Residues 445–465 (NAFFDEFIGTAVLVGCLFAIL) traverse the membrane as a helical segment. The Cytoplasmic portion of the chain corresponds to 466–473 (DDTNSPPT). The helical transmembrane segment at 474 to 494 (QGMTAFIVGLLIAAIGMALGY) threads the bilayer. Topologically, residues 495–532 (QTSFTLNPARDLGPRMFAWWIGYGPHSFHLYHWWWTWG) are extracellular. The NPA 2 motif lies at 501–503 (NPA). Residues 533 to 553 (AWGGTIGGGIAGGLIYDLVIF) form a helical membrane-spanning segment. Residues 554-598 (TGPESPLNYPDNGFIDKKVHQITAKFEKEEEVENLEKTDSPIENN) lie on the Cytoplasmic side of the membrane.

Belongs to the MIP/aquaporin (TC 1.A.8) family.

It localises to the membrane. This is an uncharacterized protein from Schizosaccharomyces pombe (strain 972 / ATCC 24843) (Fission yeast).